The following is a 284-amino-acid chain: Proteasome subunit beta (284 aa).

Residues 1–56 (MSPMESSSTRFPGQALPAAYLTPGSSSFTDFLRVAAPELMPGSRPVPDGAVEAPHG) constitute a propeptide, removed in mature form; by autocatalysis. T57 (nucleophile) is an active-site residue.

Belongs to the peptidase T1B family. The 20S proteasome core is composed of 14 alpha and 14 beta subunits that assemble into four stacked heptameric rings, resulting in a barrel-shaped structure. The two inner rings, each composed of seven catalytic beta subunits, are sandwiched by two outer rings, each composed of seven alpha subunits. The catalytic chamber with the active sites is on the inside of the barrel. Has a gated structure, the ends of the cylinder being occluded by the N-termini of the alpha-subunits. Is capped by the proteasome-associated ATPase, ARC.

It localises to the cytoplasm. The enzyme catalyses Cleavage of peptide bonds with very broad specificity.. The protein operates within protein degradation; proteasomal Pup-dependent pathway. Its activity is regulated as follows. The formation of the proteasomal ATPase ARC-20S proteasome complex, likely via the docking of the C-termini of ARC into the intersubunit pockets in the alpha-rings, may trigger opening of the gate for substrate entry. Interconversion between the open-gate and close-gate conformations leads to a dynamic regulation of the 20S proteasome proteolysis activity. Its function is as follows. Component of the proteasome core, a large protease complex with broad specificity involved in protein degradation. This is Proteasome subunit beta from Saccharopolyspora erythraea (strain ATCC 11635 / DSM 40517 / JCM 4748 / NBRC 13426 / NCIMB 8594 / NRRL 2338).